The chain runs to 324 residues: Beta-ketoacyl-[acyl-carrier-protein] synthase III (324 aa).

Active-site residues include Cys-112 and His-249. Residues 250-254 (QANRR) are ACP-binding. Asn-279 is an active-site residue.

It belongs to the thiolase-like superfamily. FabH family. Homodimer.

The protein resides in the cytoplasm. It catalyses the reaction malonyl-[ACP] + acetyl-CoA + H(+) = 3-oxobutanoyl-[ACP] + CO2 + CoA. It participates in lipid metabolism; fatty acid biosynthesis. Catalyzes the condensation reaction of fatty acid synthesis by the addition to an acyl acceptor of two carbons from malonyl-ACP. Catalyzes the first condensation reaction which initiates fatty acid synthesis and may therefore play a role in governing the total rate of fatty acid production. Possesses both acetoacetyl-ACP synthase and acetyl transacylase activities. Its substrate specificity determines the biosynthesis of branched-chain and/or straight-chain of fatty acids. The chain is Beta-ketoacyl-[acyl-carrier-protein] synthase III from Streptococcus pyogenes serotype M3 (strain ATCC BAA-595 / MGAS315).